The following is a 175-amino-acid chain: Adenylate kinase isoenzyme 6 homolog (175 aa).

ATP is bound by residues Gly18, Gly20, Lys21, Thr22, and Thr23. The interval 38–61 (CIGDVVKENHLHFGFDEKWKTYDV) is NMPbind. The interval 113-123 (SRGYSLEKIQE) is LID. Residue Arg114 coordinates ATP.

The protein belongs to the adenylate kinase family. AK6 subfamily. As to quaternary structure, interacts with small ribosomal subunit protein uS11. Not a structural component of 43S pre-ribosomes, but transiently interacts with them by binding to uS11.

Its subcellular location is the cytoplasm. The protein localises to the nucleus. The enzyme catalyses AMP + ATP = 2 ADP. It carries out the reaction ATP + H2O = ADP + phosphate + H(+). Broad-specificity nucleoside monophosphate (NMP) kinase that catalyzes the reversible transfer of the terminal phosphate group between nucleoside triphosphates and monophosphates. Also has ATPase activity. Involved in the late cytoplasmic maturation steps of the 40S ribosomal particles, specifically 18S rRNA maturation. While NMP activity is not required for ribosome maturation, ATPase activity is. Associates transiently with small ribosomal subunit protein uS11. ATP hydrolysis breaks the interaction with uS11. May temporarily remove uS11 from the ribosome to enable a conformational change of the ribosomal RNA that is needed for the final maturation step of the small ribosomal subunit. Its NMP activity may have a role in nuclear energy homeostasis. This chain is Adenylate kinase isoenzyme 6 homolog (fap7), found in Schizosaccharomyces pombe (strain 972 / ATCC 24843) (Fission yeast).